The sequence spans 370 residues: 3-isopropylmalate dehydrogenase (370 aa).

Arg99, Arg109, Arg137, and Asp227 together coordinate substrate. Residues Asp227, Asp251, and Asp255 each coordinate Mg(2+). Gly290–Asn302 provides a ligand contact to NAD(+).

Belongs to the isocitrate and isopropylmalate dehydrogenases family. LeuB type 1 subfamily. In terms of assembly, homodimer. Mg(2+) serves as cofactor. Mn(2+) is required as a cofactor.

The protein resides in the cytoplasm. It carries out the reaction (2R,3S)-3-isopropylmalate + NAD(+) = 4-methyl-2-oxopentanoate + CO2 + NADH. It functions in the pathway amino-acid biosynthesis; L-leucine biosynthesis; L-leucine from 3-methyl-2-oxobutanoate: step 3/4. Catalyzes the oxidation of 3-carboxy-2-hydroxy-4-methylpentanoate (3-isopropylmalate) to 3-carboxy-4-methyl-2-oxopentanoate. The product decarboxylates to 4-methyl-2 oxopentanoate. The chain is 3-isopropylmalate dehydrogenase from Rhodospirillum rubrum (strain ATCC 11170 / ATH 1.1.1 / DSM 467 / LMG 4362 / NCIMB 8255 / S1).